The chain runs to 290 residues: 4-hydroxy-3-methylbut-2-enyl diphosphate reductase (290 aa).

Cys13 contacts [4Fe-4S] cluster. (2E)-4-hydroxy-3-methylbut-2-enyl diphosphate is bound by residues His41 and His75. Residues His41 and His75 each coordinate dimethylallyl diphosphate. Positions 41 and 75 each coordinate isopentenyl diphosphate. Cys97 is a binding site for [4Fe-4S] cluster. Residue His129 coordinates (2E)-4-hydroxy-3-methylbut-2-enyl diphosphate. His129 lines the dimethylallyl diphosphate pocket. His129 contributes to the isopentenyl diphosphate binding site. Glu131 serves as the catalytic Proton donor. Thr167 contributes to the (2E)-4-hydroxy-3-methylbut-2-enyl diphosphate binding site. [4Fe-4S] cluster is bound at residue Cys198. Ser226, Ser227, Asn228, and Ser270 together coordinate (2E)-4-hydroxy-3-methylbut-2-enyl diphosphate. Residues Ser226, Ser227, Asn228, and Ser270 each contribute to the dimethylallyl diphosphate site. Isopentenyl diphosphate contacts are provided by Ser226, Ser227, Asn228, and Ser270.

Belongs to the IspH family. Requires [4Fe-4S] cluster as cofactor.

It catalyses the reaction isopentenyl diphosphate + 2 oxidized [2Fe-2S]-[ferredoxin] + H2O = (2E)-4-hydroxy-3-methylbut-2-enyl diphosphate + 2 reduced [2Fe-2S]-[ferredoxin] + 2 H(+). It carries out the reaction dimethylallyl diphosphate + 2 oxidized [2Fe-2S]-[ferredoxin] + H2O = (2E)-4-hydroxy-3-methylbut-2-enyl diphosphate + 2 reduced [2Fe-2S]-[ferredoxin] + 2 H(+). Its pathway is isoprenoid biosynthesis; dimethylallyl diphosphate biosynthesis; dimethylallyl diphosphate from (2E)-4-hydroxy-3-methylbutenyl diphosphate: step 1/1. The protein operates within isoprenoid biosynthesis; isopentenyl diphosphate biosynthesis via DXP pathway; isopentenyl diphosphate from 1-deoxy-D-xylulose 5-phosphate: step 6/6. Its function is as follows. Catalyzes the conversion of 1-hydroxy-2-methyl-2-(E)-butenyl 4-diphosphate (HMBPP) into a mixture of isopentenyl diphosphate (IPP) and dimethylallyl diphosphate (DMAPP). Acts in the terminal step of the DOXP/MEP pathway for isoprenoid precursor biosynthesis. The sequence is that of 4-hydroxy-3-methylbut-2-enyl diphosphate reductase from Parabacteroides distasonis (strain ATCC 8503 / DSM 20701 / CIP 104284 / JCM 5825 / NCTC 11152).